Here is a 495-residue protein sequence, read N- to C-terminus: UDP-N-acetylmuramoyl-L-alanyl-D-glutamate--2,6-diaminopimelate ligase (495 aa).

UDP-N-acetyl-alpha-D-muramoyl-L-alanyl-D-glutamate-binding positions include Leu-28, Ser-30, and 45 to 47; that span reads HRV. 117 to 123 serves as a coordination point for ATP; sequence GTNGKTT. UDP-N-acetyl-alpha-D-muramoyl-L-alanyl-D-glutamate is bound by residues Asn-158, 159-160, Ser-186, Gln-192, and Arg-194; that span reads TT. Position 226 is an N6-carboxylysine (Lys-226). Residues Arg-394, 418-421, Gly-469, and Glu-473 contribute to the meso-2,6-diaminopimelate site; that span reads DNPR. A Meso-diaminopimelate recognition motif motif is present at residues 418–421; that stretch reads DNPR.

The protein belongs to the MurCDEF family. MurE subfamily. The cofactor is Mg(2+). Carboxylation is probably crucial for Mg(2+) binding and, consequently, for the gamma-phosphate positioning of ATP.

It localises to the cytoplasm. It catalyses the reaction UDP-N-acetyl-alpha-D-muramoyl-L-alanyl-D-glutamate + meso-2,6-diaminopimelate + ATP = UDP-N-acetyl-alpha-D-muramoyl-L-alanyl-gamma-D-glutamyl-meso-2,6-diaminopimelate + ADP + phosphate + H(+). It participates in cell wall biogenesis; peptidoglycan biosynthesis. Functionally, catalyzes the addition of meso-diaminopimelic acid to the nucleotide precursor UDP-N-acetylmuramoyl-L-alanyl-D-glutamate (UMAG) in the biosynthesis of bacterial cell-wall peptidoglycan. In Histophilus somni (strain 129Pt) (Haemophilus somnus), this protein is UDP-N-acetylmuramoyl-L-alanyl-D-glutamate--2,6-diaminopimelate ligase.